The chain runs to 93 residues: Large ribosomal subunit protein uL23 (93 aa).

This sequence belongs to the universal ribosomal protein uL23 family. As to quaternary structure, part of the 50S ribosomal subunit. Contacts protein L29, and trigger factor when it is bound to the ribosome.

Functionally, one of the early assembly proteins it binds 23S rRNA. One of the proteins that surrounds the polypeptide exit tunnel on the outside of the ribosome. Forms the main docking site for trigger factor binding to the ribosome. The polypeptide is Large ribosomal subunit protein uL23 (Campylobacter fetus subsp. fetus (strain 82-40)).